The primary structure comprises 438 residues: MKDNILSALKEKISRQNWESWFLDFNVKKIEDKHVVFEVGNIFIKDRLEQKFSKIISKVVKESLGKDATFEIVYKEIDITQENEEKGPLVRKRPLLITPLNPKYTFENFVVGNFNRFAYNVFLEASKKPGYYNPIFLYSGVGLGKTHLAQALGNFLLENDPDLKVAYLTSEDFMNEMFYAIKNGTTEEFREKYRKKADILIIDDIQFLIGIKSAQVELFHTFNAIHEAGKQIIICSDRTPQELKDFHSRMISRFQMGLLVKIENPTKEDLFKIGKKISKLKGVEINDEIIDYISSIYDNPRLIHGAILKLIAYKNLYGSLNLSIAQSILTNPSKPPKALEEKLIEILSDIFECSPEEILSSKRTKNISYARKVGMYYAAKKLNLSTRDVGKVFNKSHSSVVQNISQVEKLIKEGNIIIKNYLKQIDKATKNFAQGESI.

The tract at residues 1–68 (MKDNILSALK…VVKESLGKDA (68 aa)) is domain I, interacts with DnaA modulators. Positions 68 to 98 (ATFEIVYKEIDITQENEEKGPLVRKRPLLIT) are domain II. A domain III, AAA+ region region spans residues 99-314 (PLNPKYTFEN…GAILKLIAYK (216 aa)). ATP-binding residues include Gly-142, Gly-144, Lys-145, and Thr-146. A domain IV, binds dsDNA region spans residues 315-438 (NLYGSLNLSI…TKNFAQGESI (124 aa)).

This sequence belongs to the DnaA family. Oligomerizes as a right-handed, spiral filament on DNA at oriC.

It localises to the cytoplasm. Its function is as follows. Plays an essential role in the initiation and regulation of chromosomal replication. ATP-DnaA binds to the origin of replication (oriC) to initiate formation of the DNA replication initiation complex once per cell cycle. Binds the DnaA box (a 9 base pair repeat at the origin) and separates the double-stranded (ds)DNA. Forms a right-handed helical filament on oriC DNA; dsDNA binds to the exterior of the filament while single-stranded (ss)DNA is stabiized in the filament's interior. The ATP-DnaA-oriC complex binds and stabilizes one strand of the AT-rich DNA unwinding element (DUE), permitting loading of DNA polymerase. After initiation quickly degrades to an ADP-DnaA complex that is not apt for DNA replication. Binds acidic phospholipids. The chain is Chromosomal replication initiator protein DnaA from Thermosipho africanus (strain TCF52B).